Here is a 107-residue protein sequence, read N- to C-terminus: U1-lycotoxin-Ls1b (107 aa).

The N-terminal stretch at 1 to 20 (MMKVLVVVALLATLISYSSS) is a signal peptide. The propeptide occupies 21-41 (EGIDDLEADELLSLMANEQTR). Disulfide bonds link cysteine 44–cysteine 59, cysteine 51–cysteine 68, cysteine 58–cysteine 86, and cysteine 70–cysteine 84.

The protein belongs to the neurotoxin 19 (CSTX) family. 04 (U1-Lctx) subfamily. In terms of tissue distribution, expressed by the venom gland.

Its subcellular location is the secreted. This is U1-lycotoxin-Ls1b from Lycosa singoriensis (Wolf spider).